The sequence spans 78 residues: D-alanyl carrier protein (78 aa).

The Carrier domain occupies 1 to 78 (MEFKQEVLDV…NIVNKLTELK (78 aa)). An O-(pantetheine 4'-phosphoryl)serine modification is found at Ser36.

Belongs to the DltC family. 4'-phosphopantetheine is transferred from CoA to a specific serine of apo-DCP.

The protein resides in the cytoplasm. It participates in cell wall biogenesis; lipoteichoic acid biosynthesis. Its function is as follows. Carrier protein involved in the D-alanylation of lipoteichoic acid (LTA). The loading of thioester-linked D-alanine onto DltC is catalyzed by D-alanine--D-alanyl carrier protein ligase DltA. The DltC-carried D-alanyl group is further transferred to cell membrane phosphatidylglycerol (PG) by forming an ester bond, probably catalyzed by DltD. D-alanylation of LTA plays an important role in modulating the properties of the cell wall in Gram-positive bacteria, influencing the net charge of the cell wall. This chain is D-alanyl carrier protein, found in Bacillus velezensis (strain DSM 23117 / BGSC 10A6 / LMG 26770 / FZB42) (Bacillus amyloliquefaciens subsp. plantarum).